The chain runs to 365 residues: MNAKEFLIELLKFKSVTPNDDGALNFIAMELSDFEAFFIEKEGIKNLLLTKKFKDEGEHLAFGGHVDVVPAGEGWSNNAFAPVEKEGFIYARGAQDMKSGVAAFVDAAKNADFKGARLSLILTSDEEGEAIYGTKAVLEWMQERDMLPDYAVVAEPTCVKKIGDSIKIGRRGSINGKLLIRGKQGHVAYPEKCINPVHDFAPVLKLLAGFDLDPGSAEFSPSKIVITDIRGGMGVCNVTPNDLKLMFNVRNSPDTSLEDVKSYVEKICHGLNYELELKQSSEAFLTNIDNKIVQKMNESVQKITHEVPELNTKGGTSDARYFAKYGVKVVEFGVCNDRIHAIDERVSIEEFEKLCLVFKDLIENF.

Histidine 65 is a binding site for Zn(2+). Aspartate 67 is a catalytic residue. Aspartate 96 serves as a coordination point for Zn(2+). Catalysis depends on glutamate 126, which acts as the Proton acceptor. Residues glutamate 127, glutamate 155, and histidine 340 each contribute to the Zn(2+) site.

This sequence belongs to the peptidase M20A family. DapE subfamily. As to quaternary structure, homodimer. The cofactor is Zn(2+). Co(2+) serves as cofactor.

It carries out the reaction N-succinyl-(2S,6S)-2,6-diaminopimelate + H2O = (2S,6S)-2,6-diaminopimelate + succinate. It functions in the pathway amino-acid biosynthesis; L-lysine biosynthesis via DAP pathway; LL-2,6-diaminopimelate from (S)-tetrahydrodipicolinate (succinylase route): step 3/3. Functionally, catalyzes the hydrolysis of N-succinyl-L,L-diaminopimelic acid (SDAP), forming succinate and LL-2,6-diaminopimelate (DAP), an intermediate involved in the bacterial biosynthesis of lysine and meso-diaminopimelic acid, an essential component of bacterial cell walls. The protein is Succinyl-diaminopimelate desuccinylase of Campylobacter jejuni subsp. jejuni serotype O:2 (strain ATCC 700819 / NCTC 11168).